Reading from the N-terminus, the 118-residue chain is Small ribosomal subunit protein uS13 (118 aa).

Positions 94 to 118 (SLPLRGQRTKTNARTRKGPRKPIKK) are disordered.

Belongs to the universal ribosomal protein uS13 family. Part of the 30S ribosomal subunit. Forms a loose heterodimer with protein S19. Forms two bridges to the 50S subunit in the 70S ribosome.

Functionally, located at the top of the head of the 30S subunit, it contacts several helices of the 16S rRNA. In the 70S ribosome it contacts the 23S rRNA (bridge B1a) and protein L5 of the 50S subunit (bridge B1b), connecting the 2 subunits; these bridges are implicated in subunit movement. Contacts the tRNAs in the A and P-sites. This Idiomarina loihiensis (strain ATCC BAA-735 / DSM 15497 / L2-TR) protein is Small ribosomal subunit protein uS13.